We begin with the raw amino-acid sequence, 65 residues long: UPF0434 protein BQ10150 (65 aa).

The protein belongs to the UPF0434 family.

The protein is UPF0434 protein BQ10150 of Bartonella quintana (strain Toulouse) (Rochalimaea quintana).